We begin with the raw amino-acid sequence, 364 residues long: Gap junction delta-4 protein (364 aa).

Over 1–19 (MEKLNLLGFLIITLNCNVT) the chain is Cytoplasmic. The chain crosses the membrane as a helical span at residues 20-40 (IMGMIWLIVEVLLRMLVVVLA). The Extracellular segment spans residues 41–76 (GSPIYEDEQERFICNTLQPGCANVCYDLFSPVSPLR). Residues 77-97 (FWLVQSLALLLPSVVFGTYTL) form a helical membrane-spanning segment. The Cytoplasmic portion of the chain corresponds to 98-128 (HRGAKLAAVGGACRPQVPDLSTAYLVHLLLR). A helical membrane pass occupies residues 129–149 (MLLEAGLAFLHYFLFGFSVPA). Residues 150 to 173 (RVSCSHVPCSGAVDCYVSRPTEKS) lie on the Extracellular side of the membrane. The helical transmembrane segment at 174-194 (LLILFFWAVSALSFLLSLADL) threads the bilayer. At 195 to 364 (LWILPRRKTL…HLRTKKSEWV (170 aa)) the chain is on the cytoplasmic side. Positions 331 to 340 (HLARHSSASK) are enriched in polar residues. The interval 331–364 (HLARHSSASKPQAPCRLTTSGSAPHLRTKKSEWV) is disordered.

The protein belongs to the connexin family. Delta-type subfamily. A connexon is composed of a hexamer of connexins.

It is found in the cell membrane. It localises to the cell junction. The protein localises to the gap junction. Its function is as follows. One gap junction consists of a cluster of closely packed pairs of transmembrane channels, the connexons, through which materials of low MW diffuse from one cell to a neighboring cell. This chain is Gap junction delta-4 protein (Gjd4), found in Mus musculus (Mouse).